Here is a 200-residue protein sequence, read N- to C-terminus: MTVKYVESSKLPTPMGMFAMHGFSDDSSDKEHVVLTMGDVSSEEPVLVRIHSECLTGDALFSLRCDCGAQLQAAMHKIAIEGRGAIFYLRQEGRGIGLLNKIRAYKLQDCGADTVEANERLGFGADMRDYSILKPMFEHLGIAQVKLMTNNPRKIDALTQYGINIVNRIPHETGRNPHNADYLETKKGKLGHMFGEKDGE.

Residue 49-53 participates in GTP binding; the sequence is RIHSE. C54, C65, and C67 together coordinate Zn(2+). Residues Q70, 92 to 94, and T114 contribute to the GTP site; that span reads EGR. Residue D126 is the Proton acceptor of the active site. Catalysis depends on R128, which acts as the Nucleophile. 2 residues coordinate GTP: T149 and K154.

It belongs to the GTP cyclohydrolase II family. Zn(2+) is required as a cofactor.

The enzyme catalyses GTP + 4 H2O = 2,5-diamino-6-hydroxy-4-(5-phosphoribosylamino)-pyrimidine + formate + 2 phosphate + 3 H(+). The protein operates within cofactor biosynthesis; riboflavin biosynthesis; 5-amino-6-(D-ribitylamino)uracil from GTP: step 1/4. Catalyzes the conversion of GTP to 2,5-diamino-6-ribosylamino-4(3H)-pyrimidinone 5'-phosphate (DARP), formate and pyrophosphate. The chain is GTP cyclohydrolase-2 from Saccharophagus degradans (strain 2-40 / ATCC 43961 / DSM 17024).